The chain runs to 464 residues: UDP-glycosyltransferase 76F2 (464 aa).

Residues S279, 338 to 340 (VNQ), 355 to 363 (HCGWNSTIE), and 377 to 380 (FSDQ) each bind UDP-alpha-D-glucose.

Belongs to the UDP-glycosyltransferase family.

The chain is UDP-glycosyltransferase 76F2 (UGT76F2) from Arabidopsis thaliana (Mouse-ear cress).